Reading from the N-terminus, the 241-residue chain is Uridylate kinase (241 aa).

An ATP-binding site is contributed by 15–18 (KLSG). An involved in allosteric activation by GTP region spans residues 23–28 (GTEGFG). Residue G57 coordinates UMP. ATP is bound by residues G58 and R62. Residues D77 and 138–145 (TGNPFFTT) contribute to the UMP site. ATP is bound by residues T165, Y171, and D174.

Belongs to the UMP kinase family. As to quaternary structure, homohexamer.

It is found in the cytoplasm. It catalyses the reaction UMP + ATP = UDP + ADP. Its pathway is pyrimidine metabolism; CTP biosynthesis via de novo pathway; UDP from UMP (UMPK route): step 1/1. With respect to regulation, allosterically activated by GTP. Inhibited by UTP. Its function is as follows. Catalyzes the reversible phosphorylation of UMP to UDP. The protein is Uridylate kinase of Pectobacterium atrosepticum (strain SCRI 1043 / ATCC BAA-672) (Erwinia carotovora subsp. atroseptica).